The primary structure comprises 536 residues: CTP synthase (536 aa).

The amidoligase domain stretch occupies residues 1–267; the sequence is MSKFVFVTGG…CKETLKYLDL (267 aa). Position 13 (Ser13) interacts with CTP. Residue Ser13 participates in UTP binding. ATP contacts are provided by residues 14-19 and Asp71; that span reads SIGKGI. Mg(2+)-binding residues include Asp71 and Glu141. CTP-binding positions include 148–150, 188–193, and Lys224; these read DIE and KTKPTQ. UTP is bound by residues 188-193 and Lys224; that span reads KTKPTQ. The Glutamine amidotransferase type-1 domain occupies 292 to 534; that stretch reads KVALVGKYIE…IKASQDKLTQ (243 aa). Residue Gly354 coordinates L-glutamine. Cys381 acts as the Nucleophile; for glutamine hydrolysis in catalysis. L-glutamine contacts are provided by residues 382–385, Glu405, and Arg462; that span reads LGMQ. Residues His507 and Glu509 contribute to the active site.

This sequence belongs to the CTP synthase family. In terms of assembly, homotetramer.

It catalyses the reaction UTP + L-glutamine + ATP + H2O = CTP + L-glutamate + ADP + phosphate + 2 H(+). The catalysed reaction is L-glutamine + H2O = L-glutamate + NH4(+). It carries out the reaction UTP + NH4(+) + ATP = CTP + ADP + phosphate + 2 H(+). It participates in pyrimidine metabolism; CTP biosynthesis via de novo pathway; CTP from UDP: step 2/2. Allosterically activated by GTP, when glutamine is the substrate; GTP has no effect on the reaction when ammonia is the substrate. The allosteric effector GTP functions by stabilizing the protein conformation that binds the tetrahedral intermediate(s) formed during glutamine hydrolysis. Inhibited by the product CTP, via allosteric rather than competitive inhibition. In terms of biological role, catalyzes the ATP-dependent amination of UTP to CTP with either L-glutamine or ammonia as the source of nitrogen. Regulates intracellular CTP levels through interactions with the four ribonucleotide triphosphates. The protein is CTP synthase of Prochlorococcus marinus (strain AS9601).